Consider the following 1019-residue polypeptide: MSFSPRGPSRPVLRRRRRGAALPTVVILVAVVIAVVVGARITADVWWFDQLGFLPTFTTKLWLQVLLFTLGALLLAAAVAVSLTLGYRARPIYAPVSDEQAGLDRYRESLEPLRRLVVVVLSAAAGLFGGSVAMSRWETLLLWWNRVDFGTRDEQFRMDQGFYVFTLPWLAFLVSFLTAAVVLAGIAGLAAHYLYGGLRLSGAGPRTTRAARVHLASLAAAFLLLRAAGYWLDRYELMTTSSGYVRGVVGPTYTDVHAVLPSKAILALIAVVVALLFVAAAVGTSWRLPAIGTGLLVVSAIAIGGIYPWAVQRFQVTPNRQSLESEYVGKNIDATRDAYDLSDVEVSTYAADTTASQGQLSEDAQTIPSVRLLDPSVVSQAFQQTQGQRGYYKFGETLDVDRYATPDGGTQDAVVAARELNLAGLADNQRTWVNEHTIYTHGYGVVVAQGNDRAPDGSPSYVEANVPTSGDLDLEQPRIYFGEGTTTYSIVGGRDNEIDYPDGSAGGFATTEYDGSGGVAVGSLLQKLVYGLKFGDQNILLSGSVTPESRILYDRTPRERVEKVAPWLTMDGDAYPSIVDGRVVWILDGYTTSNSYPYSAATELGDATTDALTQTQGSSVQALQDRTVNYVRNSVKATVDAYTGKVDLYAWDDTDPVLKAWMKAFPGAVEPLSAIDGSLMQHLRYPQDMFKVQREVLTRYHVTDPASFLTGQDFWDVPGDPTVDAAAGTVRPSQPPYYLTLRMPEQDTPTYSLTTTYVPASNANASGTQVLRGFAAVDSDAGSTKGTKSEGYGTIRLLELPQSTTVNGPVQIQNNIRSDTAVADQVRLLSVGDNSRVIYGNLLTLPVGGGLLYVEPIYAQSTGDNSFPRLSRVVAVFGDNIAIANTLDEALDEVFGGNSGAGAGDEGAPPPTAGTPAPTDGATGGPAPDPATGDAQVQLQQALDNAKRAIQDSSAALAEGDFTKYGEAQQRLRAAVDAASAAEARLERSGTSGPTSSSSPSASSAPPVPGETPAATPTP.

The next 7 helical transmembrane spans lie at 19–39, 61–81, 115–135, 169–189, 213–233, 264–284, and 291–311; these read GAALPTVVILVAVVIAVVVGA, LWLQVLLFTLGALLLAAAVAV, RLVVVVLSAAAGLFGGSVAMS, WLAFLVSFLTAAVVLAGIAGL, VHLASLAAAFLLLRAAGYWLD, AILALIAVVVALLFVAAAVGT, and IGTGLLVVSAIAIGGIYPWAV. Disordered stretches follow at residues 897–934 and 977–1019; these read GNSGAGAGDEGAPPPTAGTPAPTDGATGGPAPDPATGD and DAAS…TPTP. Positions 977–1005 are enriched in low complexity; the sequence is DAASAAEARLERSGTSGPTSSSSPSASSA. A compositionally biased stretch (pro residues) spans 1006–1019; that stretch reads PPVPGETPAATPTP.

Belongs to the UPF0182 family.

The protein resides in the cell membrane. The protein is UPF0182 protein Krad_1193 of Kineococcus radiotolerans (strain ATCC BAA-149 / DSM 14245 / SRS30216).